Consider the following 239-residue polypeptide: Pyridoxine 5'-phosphate synthase (239 aa).

N7 lines the 3-amino-2-oxopropyl phosphate pocket. Residue D9–H10 participates in 1-deoxy-D-xylulose 5-phosphate binding. R18 provides a ligand contact to 3-amino-2-oxopropyl phosphate. H43 acts as the Proton acceptor in catalysis. 1-deoxy-D-xylulose 5-phosphate-binding residues include R45 and H50. E70 serves as the catalytic Proton acceptor. T100 is a binding site for 1-deoxy-D-xylulose 5-phosphate. H191 acts as the Proton donor in catalysis. Residues G192 and G213–H214 each bind 3-amino-2-oxopropyl phosphate.

This sequence belongs to the PNP synthase family. Homooctamer; tetramer of dimers.

The protein resides in the cytoplasm. The enzyme catalyses 3-amino-2-oxopropyl phosphate + 1-deoxy-D-xylulose 5-phosphate = pyridoxine 5'-phosphate + phosphate + 2 H2O + H(+). It participates in cofactor biosynthesis; pyridoxine 5'-phosphate biosynthesis; pyridoxine 5'-phosphate from D-erythrose 4-phosphate: step 5/5. Catalyzes the complicated ring closure reaction between the two acyclic compounds 1-deoxy-D-xylulose-5-phosphate (DXP) and 3-amino-2-oxopropyl phosphate (1-amino-acetone-3-phosphate or AAP) to form pyridoxine 5'-phosphate (PNP) and inorganic phosphate. The protein is Pyridoxine 5'-phosphate synthase of Syntrophotalea carbinolica (strain DSM 2380 / NBRC 103641 / GraBd1) (Pelobacter carbinolicus).